The primary structure comprises 101 residues: Ubiquitin-related modifier 1 homolog 1 (101 aa).

The residue at position 101 (glycine 101) is a 1-thioglycine. Residue glycine 101 forms a Glycyl lysine isopeptide (Gly-Lys) (interchain with K-? in acceptor proteins) linkage.

Belongs to the URM1 family. In terms of processing, C-terminal thiocarboxylation occurs in 2 steps, it is first acyl-adenylated (-COAMP) via the hesA/moeB/thiF part of the MOCS3 homolog, then thiocarboxylated (-COSH) via the rhodanese domain of the MOCS3 homolog.

The protein localises to the cytoplasm. The protein operates within tRNA modification; 5-methoxycarbonylmethyl-2-thiouridine-tRNA biosynthesis. Functionally, acts as a sulfur carrier required for 2-thiolation of mcm(5)S(2)U at tRNA wobble positions of cytosolic tRNA(Lys), tRNA(Glu) and tRNA(Gln). Serves as sulfur donor in tRNA 2-thiolation reaction by being thiocarboxylated (-COSH) at its C-terminus by MOCS3. The sulfur is then transferred to tRNA to form 2-thiolation of mcm(5)S(2)U. Also acts as a ubiquitin-like protein (UBL) that is covalently conjugated via an isopeptide bond to lysine residues of target proteins. The thiocarboxylated form serves as substrate for conjugation and oxidative stress specifically induces the formation of UBL-protein conjugates. The chain is Ubiquitin-related modifier 1 homolog 1 from Arabidopsis thaliana (Mouse-ear cress).